Consider the following 127-residue polypeptide: Small ribosomal subunit protein bS6 (127 aa).

The tract at residues 99-127 is disordered; it reads PLPAPRVVPGSEPAAAPQEQPAANSEAAS. Residues 109–127 are compositionally biased toward low complexity; it reads SEPAAAPQEQPAANSEAAS.

The protein belongs to the bacterial ribosomal protein bS6 family.

Binds together with bS18 to 16S ribosomal RNA. The sequence is that of Small ribosomal subunit protein bS6 from Parasynechococcus marenigrum (strain WH8102).